A 246-amino-acid chain; its full sequence is Probable transcriptional regulatory protein APJL_1171 (246 aa).

The protein belongs to the TACO1 family.

The protein localises to the cytoplasm. This is Probable transcriptional regulatory protein APJL_1171 from Actinobacillus pleuropneumoniae serotype 3 (strain JL03).